The following is a 528-amino-acid chain: Bifunctional pantoate ligase/cytidylate kinase (528 aa).

The tract at residues 1-293 (MRLFTTIAGL…IGSCRLIDNI (293 aa)) is pantoate--beta-alanine ligase. 34–41 (MGALHKGH) lines the ATP pocket. The active-site Proton donor is the His-41. Gln-65 is a binding site for (R)-pantoate. Residue Gln-65 coordinates beta-alanine. 160-163 (GQKD) serves as a coordination point for ATP. Gln-166 lines the (R)-pantoate pocket. ATP-binding positions include Ile-189 and 197–200 (ISSR). The tract at residues 294–528 (LLRNRKPIIA…YGKSSVNNII (235 aa)) is cytidylate kinase.

The protein in the N-terminal section; belongs to the pantothenate synthetase family. This sequence in the C-terminal section; belongs to the cytidylate kinase family. Type 1 subfamily.

The protein localises to the cytoplasm. The enzyme catalyses (R)-pantoate + beta-alanine + ATP = (R)-pantothenate + AMP + diphosphate + H(+). It catalyses the reaction CMP + ATP = CDP + ADP. It carries out the reaction dCMP + ATP = dCDP + ADP. The protein operates within cofactor biosynthesis; (R)-pantothenate biosynthesis; (R)-pantothenate from (R)-pantoate and beta-alanine: step 1/1. In terms of biological role, catalyzes the condensation of pantoate with beta-alanine in an ATP-dependent reaction via a pantoyl-adenylate intermediate. Catalyzes the transfer of a phosphate group from ATP to either CMP or dCMP to form CDP or dCDP and ADP, respectively. In Trichodesmium erythraeum (strain IMS101), this protein is Bifunctional pantoate ligase/cytidylate kinase.